The sequence spans 454 residues: Serine/threonine-protein kinase NLK2 (454 aa).

The Protein kinase domain occupies 67–356 (PEPDRPIGYG…AKDALAHPYL (290 aa)). ATP is bound by residues 73–81 (IGYGAFGVV) and lysine 96. The Proton acceptor role is filled by aspartate 193.

The protein belongs to the protein kinase superfamily. CMGC Ser/Thr protein kinase family. MAP kinase subfamily. In terms of assembly, interacts with sox11, hmgxb4/hmg2l1, rnf138/narf, stat3.1 and mef2a. Requires Mg(2+) as cofactor.

It is found in the nucleus. The protein localises to the cytoplasm. The catalysed reaction is L-seryl-[protein] + ATP = O-phospho-L-seryl-[protein] + ADP + H(+). It carries out the reaction L-threonyl-[protein] + ATP = O-phospho-L-threonyl-[protein] + ADP + H(+). Activated by tyrosine and threonine phosphorylation. Functionally, negatively regulates Wnt/beta-catenin-signaling during development. Plays a role together with sox11 in neural induction during early embryogenesis. Involved in TGFbeta-mediated mesoderm induction in early embryos, acting downstream of map3k7/tak1 to phosphorylate stat3. Augments the rnf138/narf-directed ubiquitination and degradation of tcf/lef by enhancing the association of rnf138/narf and tcf/lef. Phosphorylates mef2a to play a role in anterior neural development, including eye formation. The protein is Serine/threonine-protein kinase NLK2 (nlk.2) of Xenopus tropicalis (Western clawed frog).